The chain runs to 639 residues: Chaperone protein DnaK (639 aa).

Phosphothreonine; by autocatalysis is present on threonine 198. The disordered stretch occupies residues 602 to 639 (QAKSQAQGGDNADAGKQANATADDVVDAEFEEVKDDKK). Positions 625–639 (DVVDAEFEEVKDDKK) are enriched in acidic residues.

It belongs to the heat shock protein 70 family.

In terms of biological role, acts as a chaperone. The sequence is that of Chaperone protein DnaK from Shewanella baltica (strain OS155 / ATCC BAA-1091).